Here is a 569-residue protein sequence, read N- to C-terminus: Pyrophosphate--fructose 6-phosphate 1-phosphotransferase subunit beta 2 (569 aa).

Diphosphate is bound at residue Gly-107. Asp-201 is a binding site for Mg(2+). Residues 229–231 (TID), 268–269 (KY), 276–278 (MGR), Glu-337, and 442–445 (YEGR) each bind substrate. Residue Asp-231 is the Proton acceptor of the active site.

The protein belongs to the phosphofructokinase type A (PFKA) family. PPi-dependent PFK group II subfamily. Clade 'Long' sub-subfamily. As to quaternary structure, tetramer of two alpha (regulatory) and two beta (catalytic) chains. Mg(2+) serves as cofactor.

The protein localises to the cytoplasm. It carries out the reaction beta-D-fructose 6-phosphate + diphosphate = beta-D-fructose 1,6-bisphosphate + phosphate + H(+). Its pathway is carbohydrate degradation; glycolysis; D-glyceraldehyde 3-phosphate and glycerone phosphate from D-glucose: step 3/4. Allosterically activated by fructose 2,6-bisphosphate. Functionally, catalytic subunit of pyrophosphate--fructose 6-phosphate 1-phosphotransferase. Catalyzes the phosphorylation of D-fructose 6-phosphate, the first committing step of glycolysis. Uses inorganic phosphate (PPi) as phosphoryl donor instead of ATP like common ATP-dependent phosphofructokinases (ATP-PFKs), which renders the reaction reversible, and can thus function both in glycolysis and gluconeogenesis. The polypeptide is Pyrophosphate--fructose 6-phosphate 1-phosphotransferase subunit beta 2 (Arabidopsis thaliana (Mouse-ear cress)).